We begin with the raw amino-acid sequence, 180 residues long: MESWWGLPCLAFLCFLMHARGQRDFDLADALDDPEPTKKPNSDIYPKPKPPYYPQPENPDSGGNIYPRPKPRPQPQPGNSGNSGGYFNDVDRDDGRYPPRPRPRPPAGGGGGGYSSYGNSDNTHGGDHHSTYGNPEGNMVAKIVSPIVSVVVVTLLGAAASYFKLNNRRNCFRTHEPENV.

The signal sequence occupies residues 1-21 (MESWWGLPCLAFLCFLMHARG). Topologically, residues 22-142 (QRDFDLADAL…GNPEGNMVAK (121 aa)) are extracellular. The disordered stretch occupies residues 28-133 (ADALDDPEPT…HGGDHHSTYG (106 aa)). The segment covering 47-57 (KPKPPYYPQPE) has biased composition (pro residues). Residues 143–163 (IVSPIVSVVVVTLLGAAASYF) traverse the membrane as a helical segment. The Cytoplasmic segment spans residues 164–180 (KLNNRRNCFRTHEPENV).

This sequence belongs to the CD99 family. In terms of processing, O-glycosylated. In terms of tissue distribution, expressed in erythroid tissues, including thymus, bone marrow and fetal liver, and in several nonerythroid tissues, such as heart, placenta, skeletal muscle, thyroid and trachea, as well as in skin fibroblasts. Expression is low or undetectable in other tissues.

It is found in the cell membrane. The protein is Glycoprotein Xg (XG) of Homo sapiens (Human).